Reading from the N-terminus, the 217-residue chain is MOB kinase activator 3A (217 aa).

Zn(2+) contacts are provided by Cys-83, Cys-88, His-165, and His-170.

This sequence belongs to the MOB1/phocein family.

May regulate the activity of kinases. This chain is MOB kinase activator 3A (MOB3A), found in Bos taurus (Bovine).